A 287-amino-acid chain; its full sequence is Elongation factor Ts (287 aa).

An involved in Mg(2+) ion dislocation from EF-Tu region spans residues 79-82 (TDFV).

The protein belongs to the EF-Ts family.

The protein resides in the cytoplasm. Functionally, associates with the EF-Tu.GDP complex and induces the exchange of GDP to GTP. It remains bound to the aminoacyl-tRNA.EF-Tu.GTP complex up to the GTP hydrolysis stage on the ribosome. This Anaplasma phagocytophilum (strain HZ) protein is Elongation factor Ts.